The chain runs to 447 residues: Serine/threonine-protein phosphatase 2A 55 kDa regulatory subunit B gamma isoform (447 aa).

7 WD repeats span residues 22–61, 87–128, 171–209, 220–260, 279–317, 334–375, and 410–446; these read TPADIISTVEFNHTGELLATGDKGGRVVIFQREPESKNAP, EIEE…KRPE, GHTYHINSISVNSDCETYMSADDLRINLWHLAITDRSFN, DLTE…LCDK, EIISSVSDVKFSHSGRYMLTRDYLTVKVWDLNMEARPIE, ENDC…DVTL, and DFTKKILHTAWHPAENIIAIAATNNLYIFQDKVNSDM.

The protein belongs to the phosphatase 2A regulatory subunit B family. In terms of assembly, PP2A consists of a common heterodimeric core enzyme, composed of a 36 kDa catalytic subunit (subunit C) and a 65 kDa constant regulatory subunit (PR65 or subunit A), that associates with a variety of regulatory subunits. Proteins that associate with the core dimer include three families of regulatory subunits B (the R2/B/PR55/B55, R3/B''/PR72/PR130/PR59 and R5/B'/B56 families), the 48 kDa variable regulatory subunit, viral proteins, and cell signaling molecules. Interacts with IER5.

Its function is as follows. The B regulatory subunit might modulate substrate selectivity and catalytic activity, and might also direct the localization of the catalytic enzyme to a particular subcellular compartment. This chain is Serine/threonine-protein phosphatase 2A 55 kDa regulatory subunit B gamma isoform (PPP2R2C), found in Macaca fascicularis (Crab-eating macaque).